Consider the following 37-residue polypeptide: MNQKEFQAVLDWMLSHTIIQFHEYNYMLQKSLPFLRR.

This sequence belongs to the phi29likevirus gp16.5 family.

This chain is Gene product 16.5 (16.5), found in Bacillus phage phi15 (Bacteriophage phi-15).